The following is a 192-amino-acid chain: UPF0301 protein Bamb_0737 (192 aa).

The protein belongs to the UPF0301 (AlgH) family.

The polypeptide is UPF0301 protein Bamb_0737 (Burkholderia ambifaria (strain ATCC BAA-244 / DSM 16087 / CCUG 44356 / LMG 19182 / AMMD) (Burkholderia cepacia (strain AMMD))).